A 207-amino-acid polypeptide reads, in one-letter code: LexA repressor (207 aa).

A DNA-binding region (H-T-H motif) is located at residues 28-48 (RAEIASRLGFKSANAAEEHLK). Catalysis depends on for autocatalytic cleavage activity residues Ser124 and Lys161.

Belongs to the peptidase S24 family. In terms of assembly, homodimer.

The enzyme catalyses Hydrolysis of Ala-|-Gly bond in repressor LexA.. Its function is as follows. Represses a number of genes involved in the response to DNA damage (SOS response), including recA and lexA. In the presence of single-stranded DNA, RecA interacts with LexA causing an autocatalytic cleavage which disrupts the DNA-binding part of LexA, leading to derepression of the SOS regulon and eventually DNA repair. The polypeptide is LexA repressor (Shewanella amazonensis (strain ATCC BAA-1098 / SB2B)).